A 129-amino-acid polypeptide reads, in one-letter code: Glycine cleavage system H protein (129 aa).

Residues 24–106 (TYTVGITEHA…YTDGWIFKIR (83 aa)) form the Lipoyl-binding domain. Lys-65 carries the post-translational modification N6-lipoyllysine.

It belongs to the GcvH family. As to quaternary structure, the glycine cleavage system is composed of four proteins: P, T, L and H. The cofactor is (R)-lipoate.

The glycine cleavage system catalyzes the degradation of glycine. The H protein shuttles the methylamine group of glycine from the P protein to the T protein. The polypeptide is Glycine cleavage system H protein (Enterobacter sp. (strain 638)).